The primary structure comprises 248 residues: METTTPQSKSSVSHRPPLGREDWWSEEATATLVEAWGNRYVKLNHGNLRQNDWKDVADAVNSRHGDNSRKKTDLQCKNRVDTLKKKYKTEKAKLSPSTWRFYNRLDVLIGPVVKKSAGGVVKSAPFKNHLNPTGSNSTGSSLEDDDEDDDEVGDWEFVARKHPRVEEVDLSEGSTCRELATAILKFGEVYERIEGKKQQMMIELEKQRMEVTKEVELKRMNMLMEMQLEIEKSKHRKRASASGKKNSH.

The segment covering 1–13 (METTTPQSKSSVS) has biased composition (polar residues). A disordered region spans residues 1 to 20 (METTTPQSKSSVSHRPPLGR). Residues 24–113 (WSEEATATLV…RLDVLIGPVV (90 aa)) constitute a DNA-binding region (MADF). The Nuclear localization signal motif lies at 69–76 (RKKTDLQC). Positions 123 to 150 (SAPFKNHLNPTGSNSTGSSLEDDDEDDD) are disordered. The span at 130–141 (LNPTGSNSTGSS) shows a compositional bias: polar residues. Residues 190–210 (YERIEGKKQQMMIELEKQRME) adopt a coiled-coil conformation.

Interacts with the Agrobacterium tumefaciens virulence protein F (VirF) in the nucleus. Binds to EIN2 C-terminal region in the presence of ethylene.

The protein localises to the nucleus. Its subcellular location is the nucleoplasm. In terms of biological role, probable transcription regulator. Promotes histone acetylation during ethylene signaling in an EIN2-dependent manner, thus regulating positively ethylene-responsive genes. This chain is Trihelix transcription factor ENAP2, found in Arabidopsis thaliana (Mouse-ear cress).